The following is a 152-amino-acid chain: MSCMGAAVNIITTDGPAGRAGFTASAVCSVTDTPPTLLVCLNRGASVWPVFNENRTLCVNTLSAGQEPLSNLFGGKTPMEHRFAAARWQTGVTGCPQLEEALVSFDCRISQVVSVGTHDILFCAIEAIHRHTTPYGLVWFDRSYHALMRPAC.

Belongs to the non-flavoprotein flavin reductase family. RutF subfamily.

It catalyses the reaction FMNH2 + NAD(+) = FMN + NADH + 2 H(+). Catalyzes the reduction of FMN to FMNH2 which is used to reduce pyrimidine by RutA via the Rut pathway. The sequence is that of FMN reductase (NADH) RutF from Shigella flexneri.